The primary structure comprises 643 residues: Versicolorin B synthase (643 aa).

The propeptide occupies 1 to 41 (MGRNWFQVTAMAVVPVVGIMAAVNPTILSSAASSLPSLGAM). FAD-binding positions include 84-85 (TA) and 105-106 (EA). N-linked (GlcNAc...) asparagine glycosylation occurs at asparagine 116. 171 to 174 (GAML) serves as a coordination point for FAD. 2 N-linked (GlcNAc...) asparagine glycosylation sites follow: asparagine 221 and asparagine 507. Residues alanine 613 and 624-625 (PM) each bind FAD.

It belongs to the GMC oxidoreductase family. As to quaternary structure, homodimer. Requires FAD as cofactor. Post-translationally, N-glycosylated.

The protein resides in the cytoplasm. The protein localises to the cytosol. The catalysed reaction is (2S-3S)-versiconal hemiacetal = versicolorin B + H2O. It carries out the reaction (S)-5'-oxoaverantin + H(+) = (1'S,5'S)-averufin + H2O. It participates in mycotoxin biosynthesis; aflatoxin biosynthesis. Dual cyclase; part of the gene cluster that mediates the biosynthesis of aflatoxins, a group of polyketide-derived furanocoumarins, and part of the most toxic and carcinogenic compounds among the known mycotoxins. The four major aflatoxins produced by A.parasiticus are aflatoxin B1 (AFB1), aflatoxin B2 (AFB2), aflatoxin G1 (AFG1) and aflatoxin G2 (AFG2). Aflk plays a dual role within the aflatoxin pathway, as a 5'-oxoaverantin cyclase that mediates conversion of 5'-oxoaverantin (OAVN) to averufin (AVF), as well as a versicolorin B synthase that converts versiconal (VAL) to versicolorin B (VERB) by closing the bisfuran ring of aflatoxin which is required for DNA-binding, thus giving to aflatoxin its activity as a mutagen. The biosynthesis of aflatoxins begins with the norsolorinic acid synthase aflC that combines a hexanoyl starter unit produced by the fatty acid synthase aflA/aflB and 7 malonyl-CoA extender units to synthesize the precursor NOR. The second step is the conversion of NOR to averantin and requires the norsolorinic acid ketoreductase aflD, which catalyzes the dehydration of norsolorinic acid to form (1'S)-averantin. The norsolorinic acid reductases aflE and aflF may also play a role in the conversion of NOR to AVN. The cytochrome P450 monooxygenase aflG then catalyzes the hydroxylation of AVN to 5'hydroxyaverantin (HAVN). The next step is performed by the 5'-hydroxyaverantin dehydrogenase aflH that transforms HAVN to 5'-oxoaverantin (OAVN) which is further converted to averufin (AVF) by aflK that plays a dual role in the pathway, as a 5'-oxoaverantin cyclase that mediates conversion of 5'-oxoaverantin, as well as a versicolorin B synthase in a later step in the pathway. The averufin oxidase aflI catalyzes the conversion of AVF to versiconal hemiacetal acetate (VHA). VHA is then the substrate for the versiconal hemiacetal acetate esterase aflJ to yield versiconal (VAL). Versicolorin B synthase aflK then converts VAL to versicolorin B (VERB) by closing the bisfuran ring of aflatoxin which is required for DNA-binding, thus giving to aflatoxin its activity as a mutagen. Then, the activity of the versicolorin B desaturase aflL leads to versicolorin A (VERA). A branch point starts from VERB since it can also be converted to dihydrodemethylsterigmatocystin (DMDHST), probably also by aflL, VERA being a precursor for aflatoxins B1 and G1, and DMDHST for aflatoxins B2 and G2. Next, the versicolorin reductase aflM and the cytochrome P450 monooxygenase aflN are involved in conversion of VERA to demethylsterigmatocystin (DMST). AflX and aflY seem also involved in this step, through probable aflX-mediated epoxide ring-opening step following versicolorin A oxidation and aflY-mediated Baeyer-Villiger oxidation required for the formation of the xanthone ring. The methyltransferase aflO then leads to the modification of DMST to sterigmatocystin (ST), and of DMDHST to dihydrosterigmatocystin (DHST). Both ST and DHST are then substrates of the O-methyltransferase aflP to yield O-methylsterigmatocystin (OMST) and dihydro-O-methylsterigmatocystin (DHOMST), respectively. Finally OMST is converted to aflatoxins B1 and G1, and DHOMST to aflatoxins B2 and G2, via the action of several enzymes including O-methylsterigmatocystin oxidoreductase aflQ, the cytochrome P450 monooxygenase aflU, but also the NADH-dependent flavin oxidoreductase nadA which is specifically required for the synthesis of AFG1. The sequence is that of Versicolorin B synthase from Aspergillus parasiticus (strain ATCC 56775 / NRRL 5862 / SRRC 143 / SU-1).